The following is a 680-amino-acid chain: Galactose oxidase (680 aa).

Residues 1–24 (MKHFLSLALCFSSINAVAVTVPHK) form the signal peptide. The propeptide occupies 25–41 (SGGTGSPEGSLQFLSLR). Residues 42–189 (ASAPIGSAIS…SIAEINVFQA (148 aa)) form the F5/8 type C domain. C59 and C68 are disulfide-bonded. Kelch repeat units follow at residues 223–268 (RVLM…HDMF), 279–321 (QIVV…TMSD), 323–372 (RVFT…LYRS), 436–490 (KILT…VLPD), and 492–544 (STFI…LLLP). The segment at residues 269–313 (CPGISMDGNGQIVVTGGNDAKKTSLYDSSSDSWIPGPDMQVARGY) is a cross-link (3'-(S-cysteinyl)-tyrosine (Cys-Tyr)). Position 313 (Y313) interacts with Cu cation. Residues Y536 and H537 each coordinate Cu cation. Y536 (proton acceptor) is an active-site residue. C556 and C559 are disulfide-bonded. H622 provides a ligand contact to Cu cation.

Monomer. Cu(2+) serves as cofactor. Galactose oxidase contains a protein-derived free radical cofactor. In the active state, Tyr-313, which is cross-linked to Cys-269 via a thioether bond, is oxidized to a radical and acts with Cu(2+) as a two-electron acceptor in the oxidation reaction. The cross-link is believed to modulate the redox potential of the tyrosyl radical, which is further stabilized by a stacking interaction with Trp-331 in the active site. The post-translational formation of the cross-link is closely linked to the propeptide cleavage event, and both are copper-dependent, autocatalytic processes. The propeptide may act as an intramolecular chaperone, facilitating thioester bond formation and copper binding by positioning of active-site residues, including copper ligands.

The protein localises to the secreted. The enzyme catalyses D-galactose + O2 = D-galacto-hexodialdose + H2O2. Its function is as follows. Catalyzes the sterospecific oxidation of primary alcohols to the corresponding aldehydes. The biologically relevant substrate of the enzyme is not known as the enzyme exhibits broad substrate specificity from small alcohols through sugars to oligo- and polysaccharides. The protein is Galactose oxidase (GAOA) of Gibberella zeae (strain ATCC MYA-4620 / CBS 123657 / FGSC 9075 / NRRL 31084 / PH-1) (Wheat head blight fungus).